The chain runs to 313 residues: Formimidoylglutamase (313 aa).

The Mn(2+) site is built by His130, Asp155, His157, Asp159, Asp241, and Asp243.

This sequence belongs to the arginase family. Requires Mn(2+) as cofactor.

The enzyme catalyses N-formimidoyl-L-glutamate + H2O = formamide + L-glutamate. It functions in the pathway amino-acid degradation; L-histidine degradation into L-glutamate; L-glutamate from N-formimidoyl-L-glutamate (hydrolase route): step 1/1. Functionally, catalyzes the conversion of N-formimidoyl-L-glutamate to L-glutamate and formamide. The sequence is that of Formimidoylglutamase from Salmonella schwarzengrund (strain CVM19633).